The primary structure comprises 124 residues: LOB domain-containing protein 9 (124 aa).

In terms of domain architecture, LOB spans 11–113; sequence APCALCTTKN…IYLNELKEKI (103 aa).

This sequence belongs to the LOB domain-containing protein family.

This chain is LOB domain-containing protein 9 (LBD9), found in Arabidopsis thaliana (Mouse-ear cress).